We begin with the raw amino-acid sequence, 140 residues long: Short-chain diamines transporter (140 aa).

4 consecutive transmembrane segments (helical) span residues 7-27, 36-56, 79-99, and 105-125; these read IFHA…AAAL, LALV…IYNL, VGFE…FLEI, and LMLE…FNWL.

This sequence belongs to the proteobacterial antimicrobial compound efflux (PACE) (TC 2.A.117) family.

It localises to the cell inner membrane. In terms of biological role, mediates the efflux of short-chain diamines when energized by an electrochemical gradient. Confers resistance to chlorhexidine, benzalkonium, proflavine and acriflavine. Mediates efflux of both proflavine and acriflavine via an energy-dependent mechanism. The chain is Short-chain diamines transporter from Vibrio parahaemolyticus serotype O3:K6 (strain RIMD 2210633).